Reading from the N-terminus, the 94-residue chain is Co-chaperonin GroES (94 aa).

It belongs to the GroES chaperonin family. Heptamer of 7 subunits arranged in a ring. Interacts with the chaperonin GroEL.

The protein localises to the cytoplasm. Functionally, together with the chaperonin GroEL, plays an essential role in assisting protein folding. The GroEL-GroES system forms a nano-cage that allows encapsulation of the non-native substrate proteins and provides a physical environment optimized to promote and accelerate protein folding. GroES binds to the apical surface of the GroEL ring, thereby capping the opening of the GroEL channel. The protein is Co-chaperonin GroES of Streptococcus pneumoniae (strain CGSP14).